Here is a 639-residue protein sequence, read N- to C-terminus: Protein argonaute (639 aa).

Residues 1-100 (MYLNLYKIDI…YIKKLFLDND (100 aa)) are N-terminal domain. The tract at residues 101 to 153 (FYFKKGNNFISNSEVFSLDSNENVNAHLTYKIKIHNISNEYYLSILPKFTFLS) is linker L1. The interval 154-209 (KEPALESAIKSGYLYNIKSGKSFPYISGLDGILKIDIGNNQIVEVAYPENYLFNFT) is PAZ domain. Residues 210–292 (TRDAEKYGFS…KYSFYKNEQP (83 aa)) are linker L2. The interval 293–424 (LKAIFFFSSK…YVYKMGNFIP (132 aa)) is mid domain. The segment at 425-639 (ECKPFILKKM…DYEWKLYIPY (215 aa)) is PIWI domain. Catalysis depends on residues aspartate 446, glutamate 482, aspartate 516, and asparagine 624. Aspartate 446 is a Mn(2+) binding site. Mn(2+)-binding residues include aspartate 516 and asparagine 624.

Belongs to the argonaute family. Long pAgo subfamily. Mn(2+) is required as a cofactor.

It is found in the cytoplasm. Functionally, an RNA-guided ssDNA endonuclease that may play a role in defense against invading mobile genetic elements. Uses short 5'-OH-ssRNA sequences as guides (gRNA) to bind complementary target DNA (tDNA) or target RNA resulting in target cleavage. The cleavage site is 10 nucleotides (nt) downstream of the target residue base-paired with the 5'-end of the gRNA. Reaction rates are fastest on 5'-OH-gRNA:tDNA followed by 5'-OH-gRNA:target RNA. gRNA between 17-21 nt supports equivalent rates of cleavage, has no preferred 5'-nt. Has weak activity on tDNA with 5'-phospho-gRNA, yielding products 1-2 nt longer. Unlike other characterized prokaryotic Ago proteins symmetric mismatches centered around the cleavage site reduce cleavage efficiency. This chain is Protein argonaute, found in Marinitoga piezophila (strain DSM 14283 / JCM 11233 / KA3).